A 710-amino-acid chain; its full sequence is Amyloid beta precursor protein binding family B member 1 (710 aa).

Phosphoserine is present on S135. 2 disordered regions span residues 143-256 (EQGP…SDLP) and 276-300 (GTTQWEPPGRASPSQGSSPQEESQL). The span at 145–173 (GPDEGEEKAAGEAEEDDEDEEEEEEEEDL) shows a compositional bias: acidic residues. Residue K204 is modified to N6-acetyllysine. Positions 223–234 (SWATLSQGSPSY) are enriched in polar residues. One can recognise a WW domain in the interval 253-285 (SDLPAGWMRVQDTSGTYYWHIPTGTTQWEPPGR). A compositionally biased stretch (low complexity) spans 287–299 (SPSQGSSPQEESQ). In terms of domain architecture, PID 1 spans 370 to 509 (FAVRSLGWVE…SKIMSERRNA (140 aa)). A Phosphoserine; by PKC modification is found at S459. S517 is subject to Phosphoserine. Residues 542–699 (KFQVYYLGNV…RRGVQSLWGS (158 aa)) enclose the PID 2 domain. Y547 bears the Phosphotyrosine; by ABL1 mark. S610 is subject to Phosphoserine; by SGK1. At K701 the chain carries N6-acetyllysine.

Component of a complex, at least composed of APBB1, RASD1/DEXRAS1 and APP. Interacts (via PID domain 2) with APP (with the intracellular domain of the amyloid-beta precursor protein). Interacts (via PID domain 2) with RASD1/DEXRAS1; impairs the transcription activation activity. Interacts (via PID domain 1) with KAT5/TIP60. Interacts (via the WW domain) with the proline-rich region of APBB1IP. Interacts with TSHZ1 and TSHZ2. Interacts (via the WW domain) with histone H2AX (when phosphorylated on 'Tyr-142') and the proline-rich region of ENAH. Interacts with MAPK8. Interacts (via PID domain 1) with TSHZ3 (via homeobox domain). Interacts with SET. Found in a trimeric complex with HDAC1 and TSHZ3; the interaction between HDAC1 and APBB1 is mediated by TSHZ3. Interacts (via WWW domain) with NEK6. Interacts (via WWW domain) with ABL1. Interacts with RNF157. Interacts with ARF6. In terms of processing, polyubiquitination by RNF157 leads to degradation by the proteasome. Phosphorylation at Ser-610 by SGK1 promotes its localization to the nucleus. Phosphorylated following nuclear translocation. Phosphorylation at Tyr-546 by ABL1 enhances transcriptional activation activity and reduces the affinity for RASD1/DEXRAS1. Post-translationally, acetylation at Lys-204 and Lys-701 by KAT5 promotes its transcription activator activity. Phosphorylated at Ser-459 by PKC upon insulin activation. Expressed in the brain, retinal lens and muscle cells (at protein level).

It localises to the cell membrane. Its subcellular location is the cytoplasm. The protein resides in the nucleus. It is found in the cell projection. The protein localises to the growth cone. It localises to the nucleus speckle. Functionally, transcription coregulator that can have both coactivator and corepressor functions. Adapter protein that forms a transcriptionally active complex with the gamma-secretase-derived amyloid precursor protein (APP) intracellular domain. Plays a central role in the response to DNA damage by translocating to the nucleus and inducing apoptosis. May act by specifically recognizing and binding histone H2AX phosphorylated on 'Tyr-142' (H2AXY142ph) at double-strand breaks (DSBs), recruiting other pro-apoptosis factors such as MAPK8/JNK1. Required for histone H4 acetylation at double-strand breaks (DSBs). Its ability to specifically bind modified histones and chromatin modifying enzymes such as KAT5/TIP60, probably explains its transcription activation activity. Functions in association with TSHZ3, SET and HDAC factors as a transcriptional repressor, that inhibits the expression of CASP4. Associates with chromatin in a region surrounding the CASP4 transcriptional start site(s). Involved in hippocampal neurite branching and neuromuscular junction formation, as a result plays a role in spatial memory functioning. Plays a role in the maintenance of lens transparency. May play a role in muscle cell strength. Acts as a molecular adapter that functions in neurite outgrowth by activating the RAC1-ARF6 axis upon insulin treatment. The polypeptide is Amyloid beta precursor protein binding family B member 1 (Mus musculus (Mouse)).